The following is a 514-amino-acid chain: MTHPQTIALVESLDHEGRGVAHVDGKTLFIDGALPYEKVIYSSYRKKPSYENAQTSAVLKESFMRADPRCPHFGVCGGCSMQHVEFTAQVAIKQRVLEDNLKRIGKVKAERVLTPIAGPAWHYRHRARLSARMVAKKGGVLVGFHEKSSSYIAEMRECHILPKHISDLIMPLREMIATLSISQRMPQVEVAVGDKLDILVFRNMDDITDADFAILKAFSDKHGAAERPLQIWLQPKGPDTCYPIYPLDAPKLTYSMPEFAVEMPYYPTEFTQVNPQINAVMVARALKFLDPQPGERIADMFCGIGNFTLPIARSGAVVHGMEGSQPLVRRAVENATHNGLQDKVSYEMANLFDVTEESFAALGKFDKMLVDPPRDGAVQLLKAITEETAPQRIVYVSCNPSTLARDAGVLVHTKGYTLKAAGIINMFPHTAHVESVAWFEKTGPCKTRKEVEEIEALEAAEREAAKAARLAEENAEKARKAAELAEKAAAKEARRAHYFAEKARRDAEEAASDQ.

Positions 70, 76, 79, and 158 each coordinate [4Fe-4S] cluster. 6 residues coordinate S-adenosyl-L-methionine: Gln-272, Phe-301, Asn-306, Glu-322, Asn-350, and Asp-371. Residue Cys-398 is the Nucleophile of the active site.

The protein belongs to the class I-like SAM-binding methyltransferase superfamily. RNA M5U methyltransferase family. RlmD subfamily.

The catalysed reaction is uridine(1939) in 23S rRNA + S-adenosyl-L-methionine = 5-methyluridine(1939) in 23S rRNA + S-adenosyl-L-homocysteine + H(+). Catalyzes the formation of 5-methyl-uridine at position 1939 (m5U1939) in 23S rRNA. The protein is 23S rRNA (uracil(1939)-C(5))-methyltransferase RlmD of Chromobacterium violaceum (strain ATCC 12472 / DSM 30191 / JCM 1249 / CCUG 213 / NBRC 12614 / NCIMB 9131 / NCTC 9757 / MK).